The primary structure comprises 132 residues: Replication enhancer protein (132 aa).

This sequence belongs to the geminiviridae replication enhancer protein family. Homooligomer. Interacts with the replication-associated protein (REP). Interacts with host proliferating cell nuclear antigen (PCNA). Interacts with host retinoblastoma-related protein 1 (RBR1), and may thereby deregulate the host cell cycle. Oligomerization and interaction with PCNA are necessary for optimal replication enhancement.

In terms of biological role, increases viral DNA accumulation. Enhances infectivity and symptom expression. This chain is Replication enhancer protein, found in Macroptilium lathyroides (Lima bean).